The primary structure comprises 286 residues: Expansin-B4 (286 aa).

The signal sequence occupies residues 1-24 (MGSLSSLAAAAVFLSLLAVGHCAA). 2 N-linked (GlcNAc...) asparagine glycosylation sites follow: asparagine 28 and asparagine 44. Residues 75–181 (GGACGFKHTN…TRVPCEFPGL (107 aa)) form the Expansin-like EG45 domain. Cystine bridges form between cysteine 78/cysteine 106, cysteine 109/cysteine 176, and cysteine 114/cysteine 120. Positions 194-281 (VYFAVLVEYE…NWRPNTFYRS (88 aa)) constitute an Expansin-like CBD domain. A glycan (N-linked (GlcNAc...) asparagine) is linked at asparagine 257.

This sequence belongs to the expansin family. Expansin B subfamily. In terms of tissue distribution, expressed in internodes.

Its subcellular location is the secreted. It is found in the cell wall. It localises to the membrane. In terms of biological role, may cause loosening and extension of plant cell walls by disrupting non-covalent bonding between cellulose microfibrils and matrix glucans. No enzymatic activity has been found. May be required for rapid internodal elongation in deepwater rice during submergence. The protein is Expansin-B4 (EXPB4) of Oryza sativa subsp. japonica (Rice).